The sequence spans 455 residues: Chromosomal replication initiator protein DnaA (455 aa).

A domain I, interacts with DnaA modulators region spans residues 1–74 (MFDIEKFWQH…IQSAYGYAGI (74 aa)). Positions 74–117 (IEILPVFQINENNDSPERIVTPEPRYAIQLQQEKRAHKQFTKNL) are domain II. Residues 118–334 (KLNEKYTFDN…GALVKVQAYA (217 aa)) are domain III, AAA+ region. 4 residues coordinate ATP: G162, G164, K165, and T166. The tract at residues 335-455 (TIERADINVN…VFDLKQMIEH (121 aa)) is domain IV, binds dsDNA.

Belongs to the DnaA family. Oligomerizes as a right-handed, spiral filament on DNA at oriC.

The protein resides in the cytoplasm. Its function is as follows. Plays an essential role in the initiation and regulation of chromosomal replication. ATP-DnaA binds to the origin of replication (oriC) to initiate formation of the DNA replication initiation complex once per cell cycle. Binds the DnaA box (a 9 base pair repeat at the origin) and separates the double-stranded (ds)DNA. Forms a right-handed helical filament on oriC DNA; dsDNA binds to the exterior of the filament while single-stranded (ss)DNA is stabiized in the filament's interior. The ATP-DnaA-oriC complex binds and stabilizes one strand of the AT-rich DNA unwinding element (DUE), permitting loading of DNA polymerase. After initiation quickly degrades to an ADP-DnaA complex that is not apt for DNA replication. Binds acidic phospholipids. This chain is Chromosomal replication initiator protein DnaA, found in Lactobacillus helveticus (strain DPC 4571).